Reading from the N-terminus, the 55-residue chain is Large ribosomal subunit protein bL32 (55 aa).

The interval 1-27 (MAVQQNKPTRSKRGMRRSHDALTTATL) is disordered.

It belongs to the bacterial ribosomal protein bL32 family.

In Yersinia enterocolitica serotype O:8 / biotype 1B (strain NCTC 13174 / 8081), this protein is Large ribosomal subunit protein bL32.